We begin with the raw amino-acid sequence, 240 residues long: Cysteine-rich venom protein ablomin (240 aa).

The signal sequence occupies residues 1–19 (MIVFIVLPILAAVLQQSSG). Residues 38–166 (VDLHNSLRRS…EYSYFYVCQY (129 aa)) enclose the SCP domain. 8 disulfide bridges follow: cysteine 75-cysteine 153, cysteine 92-cysteine 167, cysteine 148-cysteine 164, cysteine 186-cysteine 193, cysteine 189-cysteine 198, cysteine 202-cysteine 235, cysteine 211-cysteine 229, and cysteine 220-cysteine 233. In terms of domain architecture, ShKT spans 202–235 (CTQEDVFTNCNSLVQQSNCQHNYIKTNCPASCFC).

It belongs to the CRISP family. Expressed by the venom gland.

It is found in the secreted. In terms of biological role, blocks contraction of smooth muscle elicited by high potassium-induced depolarization, but does not block caffeine-stimulated contraction. Since high potassium-treatment activates voltage-gated channels and caffeine exposure activates ryanodine receptors, this toxin may target L-type voltage-gated calcium channels (Cav) (and not ryanodine receptors) on smooth muscle. This toxin also shows a little inhibition on cyclic nucleotide-gated CNGA1 channel. This Gloydius blomhoffii (Mamushi) protein is Cysteine-rich venom protein ablomin.